The chain runs to 358 residues: tRNA-specific 2-thiouridylase MnmA (358 aa).

ATP is bound by residues 8 to 15 (AMSGGVDS) and Met-35. Positions 95–97 (NPD) are interaction with target base in tRNA. The active-site Nucleophile is the Cys-100. Residues Cys-100 and Cys-194 are joined by a disulfide bond. Position 124 (Gly-124) interacts with ATP. The interaction with tRNA stretch occupies residues 144–146 (KDQ). The active-site Cysteine persulfide intermediate is Cys-194. The segment at 301 to 302 (RY) is interaction with tRNA.

The protein belongs to the MnmA/TRMU family.

Its subcellular location is the cytoplasm. The catalysed reaction is S-sulfanyl-L-cysteinyl-[protein] + uridine(34) in tRNA + AH2 + ATP = 2-thiouridine(34) in tRNA + L-cysteinyl-[protein] + A + AMP + diphosphate + H(+). Catalyzes the 2-thiolation of uridine at the wobble position (U34) of tRNA, leading to the formation of s(2)U34. This Chlamydia trachomatis serovar D (strain ATCC VR-885 / DSM 19411 / UW-3/Cx) protein is tRNA-specific 2-thiouridylase MnmA.